The chain runs to 77 residues: Protein IDA (77 aa).

A signal peptide spans 1–26 (MAPCRTMMVLLCFVLFLAASSSCVAA). The tract at residues 56 to 69 (GVPIPPSAPSKRHN) is RLK5-binding.

Interaction with RLK5. As to expression, expressed specifically in the floral abscission zone.

The protein localises to the secreted. It localises to the extracellular space. Functionally, involved in an ethylene-independent separation step of floral abscission. Promotes abscission zone (AZ) cells rounding. May act with RLK5 and HSL2 as ligand-receptor pairs. This chain is Protein IDA, found in Arabidopsis thaliana (Mouse-ear cress).